The following is a 541-amino-acid chain: Arginine--tRNA ligase (541 aa).

Positions 119-129 match the 'HIGH' region motif; it reads ANPTGPLHIGH.

The protein belongs to the class-I aminoacyl-tRNA synthetase family. Monomer.

Its subcellular location is the cytoplasm. It catalyses the reaction tRNA(Arg) + L-arginine + ATP = L-arginyl-tRNA(Arg) + AMP + diphosphate. This Helicobacter pylori (strain G27) protein is Arginine--tRNA ligase.